The following is a 182-amino-acid chain: Ribosome-recycling factor (182 aa).

This sequence belongs to the RRF family.

Its subcellular location is the cytoplasm. In terms of biological role, responsible for the release of ribosomes from messenger RNA at the termination of protein biosynthesis. May increase the efficiency of translation by recycling ribosomes from one round of translation to another. In Gloeothece citriformis (strain PCC 7424) (Cyanothece sp. (strain PCC 7424)), this protein is Ribosome-recycling factor.